Reading from the N-terminus, the 279-residue chain is Urease accessory protein UreD (279 aa).

This sequence belongs to the UreD family. UreD, UreF and UreG form a complex that acts as a GTP-hydrolysis-dependent molecular chaperone, activating the urease apoprotein by helping to assemble the nickel containing metallocenter of UreC. The UreE protein probably delivers the nickel.

It localises to the cytoplasm. Its function is as follows. Required for maturation of urease via the functional incorporation of the urease nickel metallocenter. This Brucella suis (strain ATCC 23445 / NCTC 10510) protein is Urease accessory protein UreD.